We begin with the raw amino-acid sequence, 423 residues long: MTKRLQARRLDGIDQNLWVEFGKLTKEYDVVNLGQGFPDFSPPDFATQAFQQATSGNFMLNQYTRAFGYPPLTNVLASFFGKLLGQEMDPLTNVLVTVGAYGALFTRFQALVDEGDEVIIMEPAFDCYEPMTMMAGGCPVFVTLKPSPAPKGKLGASNDWQLDPAELASKFTPRTKILVLNTPNNPLGKVFSRMELELVANLCQQHDVVCISDEVYQWLVYDGHQHVSIASLPGMWDRTLTIGSAGKSFSATGWKVGWVMGPDNIMKHLRTVHQNSIFHCPTQAQAAVAQCFEREQQHFGQPSSYFLQLPQAMELNRDHMIRSLQSVGLKLWISQGSYFLIADISDFKSKMPDLPGAEDEPYDRRFAKWMIKNMGLVGIPVSTFFSRPHQKDFDHYIRFCFVKDKATLQAMDERLRKWKELQP.

Glycine 36 provides a ligand contact to substrate. Residue lysine 82 is modified to N6-succinyllysine. Position 185 (asparagine 185) interacts with substrate. Lysine 247 is subject to N6-(pyridoxal phosphate)lysine. Residue arginine 398 participates in substrate binding.

The protein belongs to the class-I pyridoxal-phosphate-dependent aminotransferase family. In terms of assembly, homodimer. It depends on pyridoxal 5'-phosphate as a cofactor. Detected in kidney.

The protein localises to the cytoplasm. Its subcellular location is the cytosol. The protein resides in the mitochondrion matrix. The catalysed reaction is L-kynurenine + 2-oxoglutarate = kynurenate + L-glutamate + H2O. It carries out the reaction 3-phenylpyruvate + L-glutamine = 2-oxoglutaramate + L-phenylalanine. The enzyme catalyses an S-substituted L-cysteine + H2O = a thiol + pyruvate + NH4(+). It participates in amino-acid degradation; L-kynurenine degradation; kynurenate from L-kynurenine: step 1/2. With respect to regulation, inhibited by aminooxyacetate (in vitro). Functionally, catalyzes the irreversible transamination of the L-tryptophan metabolite L-kynurenine to form kynurenic acid (KA), an intermediate in the tryptophan catabolic pathway which is also a broad spectrum antagonist of the three ionotropic excitatory amino acid receptors among others. Metabolizes the cysteine conjugates of certain halogenated alkenes and alkanes to form reactive metabolites. Catalyzes the beta-elimination of S-conjugates and Se-conjugates of L-(seleno)cysteine, resulting in the cleavage of the C-S or C-Se bond. The protein is Kynurenine--oxoglutarate transaminase 1 of Rattus norvegicus (Rat).